We begin with the raw amino-acid sequence, 353 residues long: Ribosomal RNA small subunit methyltransferase (353 aa).

Residues 1–10 (MAGGKIRKEK) are compositionally biased toward basic residues. The interval 1 to 23 (MAGGKIRKEKPKASNRAPSNHYQ) is disordered. Residues histidine 35, leucine 37, glycine 62, glutamate 83, aspartate 111, and asparagine 126 each contribute to the S-adenosyl-L-methionine site. Residues 270–313 (ALNTTSMDLGDQSMGMEDDDNEMDDDDMEMDEGEGDGGETSEFK) are disordered. The segment covering 285 to 308 (MEDDDNEMDDDDMEMDEGEGDGGE) has biased composition (acidic residues).

The protein belongs to the class I-like SAM-binding methyltransferase superfamily. rRNA adenine N(6)-methyltransferase family. Expressed in rapidly dividing tissues, including root meristems and lateral root primordia, developing cotyledons and leaves, petals, anther, pollen grains and silique abscission zone.

The protein resides in the nucleus. It localises to the nucleolus. It carries out the reaction adenosine(1785)/adenosine(1786) in 18S rRNA + 4 S-adenosyl-L-methionine = N(6)-dimethyladenosine(1785)/N(6)-dimethyladenosine(1786) in 18S rRNA + 4 S-adenosyl-L-homocysteine + 4 H(+). Functionally, N6-adenine methyltransferase which modifies the AA dinucleotide at the plant nuclear 18S rRNA nucleotides A1785 and A1786. Required for generating appropriate patterns of gene expression during root development, including the cell-specific expression of transcriptional regulators involved in root hair and non-hair cells patterning. This chain is Ribosomal RNA small subunit methyltransferase, found in Arabidopsis thaliana (Mouse-ear cress).